A 237-amino-acid polypeptide reads, in one-letter code: Uridylate kinase (237 aa).

9–12 (KLSG) provides a ligand contact to ATP. Glycine 51 is a UMP binding site. ATP is bound by residues glycine 52 and arginine 56. UMP contacts are provided by residues aspartate 71 and 132 to 139 (CGNPFFTT). Residues threonine 159, tyrosine 165, and aspartate 168 each coordinate ATP.

The protein belongs to the UMP kinase family. Homohexamer.

The protein localises to the cytoplasm. It carries out the reaction UMP + ATP = UDP + ADP. Its pathway is pyrimidine metabolism; CTP biosynthesis via de novo pathway; UDP from UMP (UMPK route): step 1/1. Its activity is regulated as follows. Inhibited by UTP. In terms of biological role, catalyzes the reversible phosphorylation of UMP to UDP. The chain is Uridylate kinase from Prochlorococcus marinus (strain MIT 9313).